The following is a 655-amino-acid chain: Squalene-tetrahymanol cyclase THC1 (655 aa).

Residues 1–20 (MKKILIGLIIGLFLFSSVNA) form the signal peptide. Residues Asn23, Asn44, Asn69, and Asn77 are each glycosylated (N-linked (GlcNAc...) asparagine). The active-site Proton donor is Asp373. PFTB repeat units lie at residues 393 to 435 (IPET…GIAN) and 515 to 562 (VQNS…GLLA).

It belongs to the terpene cyclase/mutase family.

It localises to the membrane. It catalyses the reaction tetrahymanol = squalene + H2O. Its activity is regulated as follows. 2,3-iminosqualene and N,N-dimethyldodecylamine~N-oxlde are effective inhibitors with IC(50) values of 50 and 30 nM, respectively. Its function is as follows. Squalene cyclase that catalyzes the oxygen-independent cyclization of squalene into tetrahymanol, a triterpenoid sterol with five cyclohexyl rings that is involved in membrane integrity, permeability and fluidity. This is Squalene-tetrahymanol cyclase THC1 from Tetrahymena thermophila (strain SB210).